A 408-amino-acid chain; its full sequence is AA9 family lytic polysaccharide monooxygenase A (408 aa).

The first 20 residues, 1 to 20, serve as a signal peptide directing secretion; the sequence is MKTTTYSLLALAAASKLASA. Residues His21 and His103 each coordinate Cu(2+). Cys63 and Cys186 are oxidised to a cystine. The N-linked (GlcNAc...) asparagine glycan is linked to Asn151. His172 contributes to the O2 binding site. Tyr183 provides a ligand contact to Cu(2+). Residues Asn331 and Asn381 are each glycosylated (N-linked (GlcNAc...) asparagine). In terms of domain architecture, CBM1 spans 369-405; the sequence is GVAKQYERCGGINHTGPTTCESGSVCKKWNPYYYQCV.

Belongs to the polysaccharide monooxygenase AA9 family. The cofactor is Cu(2+).

It is found in the secreted. It carries out the reaction [(1-&gt;4)-beta-D-glucosyl]n+m + reduced acceptor + O2 = 4-dehydro-beta-D-glucosyl-[(1-&gt;4)-beta-D-glucosyl]n-1 + [(1-&gt;4)-beta-D-glucosyl]m + acceptor + H2O.. In terms of biological role, lytic polysaccharide monooxygenase (LPMO) that depolymerizes crystalline and amorphous polysaccharides via the oxidation of scissile alpha- or beta-(1-4)-glycosidic bonds, yielding C4 oxidation products. Catalysis by LPMOs requires the reduction of the active-site copper from Cu(II) to Cu(I) by a reducing agent and H(2)O(2) or O(2) as a cosubstrate. The sequence is that of AA9 family lytic polysaccharide monooxygenase A (eglD) from Aspergillus kawachii (strain NBRC 4308) (White koji mold).